The primary structure comprises 593 residues: V-type ATP synthase alpha chain (593 aa).

246-253 (GPFGAGKT) lines the ATP pocket.

The protein belongs to the ATPase alpha/beta chains family.

The catalysed reaction is ATP + H2O + 4 H(+)(in) = ADP + phosphate + 5 H(+)(out). In terms of biological role, produces ATP from ADP in the presence of a proton gradient across the membrane. The V-type alpha chain is a catalytic subunit. This Protochlamydia amoebophila (strain UWE25) protein is V-type ATP synthase alpha chain.